The following is a 207-amino-acid chain: Peptidyl-tRNA hydrolase (207 aa).

Position 15 (Y15) interacts with tRNA. Residue H20 is the Proton acceptor of the active site. F66, N68, and N114 together coordinate tRNA. The disordered stretch occupies residues H187–G207. The span at R198–G207 shows a compositional bias: low complexity.

The protein belongs to the PTH family. As to quaternary structure, monomer.

The protein localises to the cytoplasm. The catalysed reaction is an N-acyl-L-alpha-aminoacyl-tRNA + H2O = an N-acyl-L-amino acid + a tRNA + H(+). Its function is as follows. Hydrolyzes ribosome-free peptidyl-tRNAs (with 1 or more amino acids incorporated), which drop off the ribosome during protein synthesis, or as a result of ribosome stalling. Catalyzes the release of premature peptidyl moieties from peptidyl-tRNA molecules trapped in stalled 50S ribosomal subunits, and thus maintains levels of free tRNAs and 50S ribosomes. This chain is Peptidyl-tRNA hydrolase, found in Delftia acidovorans (strain DSM 14801 / SPH-1).